A 211-amino-acid polypeptide reads, in one-letter code: Pyridoxine/pyridoxamine 5'-phosphate oxidase (211 aa).

Substrate is bound by residues 7-10 (RRDY) and lysine 65. Residues 60 to 65 (RIVLLK), 75 to 76 (YT), arginine 81, lysine 82, and glutamine 104 each bind FMN. Tyrosine 122, arginine 126, and serine 130 together coordinate substrate. FMN-binding positions include 139-140 (QS) and tryptophan 184. A substrate-binding site is contributed by 190–192 (RLH). Position 194 (arginine 194) interacts with FMN.

This sequence belongs to the pyridoxamine 5'-phosphate oxidase family. In terms of assembly, homodimer. FMN serves as cofactor.

The enzyme catalyses pyridoxamine 5'-phosphate + O2 + H2O = pyridoxal 5'-phosphate + H2O2 + NH4(+). It catalyses the reaction pyridoxine 5'-phosphate + O2 = pyridoxal 5'-phosphate + H2O2. The protein operates within cofactor metabolism; pyridoxal 5'-phosphate salvage; pyridoxal 5'-phosphate from pyridoxamine 5'-phosphate: step 1/1. Its pathway is cofactor metabolism; pyridoxal 5'-phosphate salvage; pyridoxal 5'-phosphate from pyridoxine 5'-phosphate: step 1/1. Functionally, catalyzes the oxidation of either pyridoxine 5'-phosphate (PNP) or pyridoxamine 5'-phosphate (PMP) into pyridoxal 5'-phosphate (PLP). In Aliivibrio fischeri (strain ATCC 700601 / ES114) (Vibrio fischeri), this protein is Pyridoxine/pyridoxamine 5'-phosphate oxidase.